The primary structure comprises 664 residues: ATP synthase subunit alpha 2 (664 aa).

180–187 contributes to the ATP binding site; sequence GDRATGKT. A disordered region spans residues 525–664; sequence MPAEDAAGDI…DAEAEARHKR (140 aa). Over residues 543–588 the composition is skewed to basic and acidic residues; sequence ARGDADRDADHGANREVSREVSPEASREVSREVSCEVSHEADRDAA. A compositionally biased stretch (low complexity) spans 589-599; that stretch reads ADAARVAGRAP. Over residues 621 to 639 the composition is skewed to basic and acidic residues; that stretch reads ADGDRASASRPRPDARGDA.

The protein belongs to the ATPase alpha/beta chains family. F-type ATPases have 2 components, CF(1) - the catalytic core - and CF(0) - the membrane proton channel. CF(1) has five subunits: alpha(3), beta(3), gamma(1), delta(1), epsilon(1). CF(0) has three main subunits: a(1), b(2) and c(9-12). The alpha and beta chains form an alternating ring which encloses part of the gamma chain. CF(1) is attached to CF(0) by a central stalk formed by the gamma and epsilon chains, while a peripheral stalk is formed by the delta and b chains.

Its subcellular location is the cell inner membrane. The enzyme catalyses ATP + H2O + 4 H(+)(in) = ADP + phosphate + 5 H(+)(out). Functionally, produces ATP from ADP in the presence of a proton gradient across the membrane. The alpha chain is a regulatory subunit. This chain is ATP synthase subunit alpha 2, found in Burkholderia pseudomallei (strain 1710b).